The following is a 217-amino-acid chain: Probable transaldolase (217 aa).

K83 acts as the Schiff-base intermediate with substrate in catalysis.

It belongs to the transaldolase family. Type 3B subfamily.

It is found in the cytoplasm. It carries out the reaction D-sedoheptulose 7-phosphate + D-glyceraldehyde 3-phosphate = D-erythrose 4-phosphate + beta-D-fructose 6-phosphate. It participates in carbohydrate degradation; pentose phosphate pathway; D-glyceraldehyde 3-phosphate and beta-D-fructose 6-phosphate from D-ribose 5-phosphate and D-xylulose 5-phosphate (non-oxidative stage): step 2/3. Functionally, transaldolase is important for the balance of metabolites in the pentose-phosphate pathway. This is Probable transaldolase from Anaeromyxobacter sp. (strain K).